Consider the following 291-residue polypeptide: Elongation factor Ts (291 aa).

The interval 79 to 82 (TDFV) is involved in Mg(2+) ion dislocation from EF-Tu.

The protein belongs to the EF-Ts family.

Its subcellular location is the cytoplasm. Its function is as follows. Associates with the EF-Tu.GDP complex and induces the exchange of GDP to GTP. It remains bound to the aminoacyl-tRNA.EF-Tu.GTP complex up to the GTP hydrolysis stage on the ribosome. This is Elongation factor Ts from Roseobacter denitrificans (strain ATCC 33942 / OCh 114) (Erythrobacter sp. (strain OCh 114)).